We begin with the raw amino-acid sequence, 222 residues long: Methylthioribulose-1-phosphate dehydratase (222 aa).

His94 and His96 together coordinate Zn(2+).

Belongs to the aldolase class II family. MtnB subfamily. Zn(2+) serves as cofactor.

It carries out the reaction 5-(methylsulfanyl)-D-ribulose 1-phosphate = 5-methylsulfanyl-2,3-dioxopentyl phosphate + H2O. It functions in the pathway amino-acid biosynthesis; L-methionine biosynthesis via salvage pathway; L-methionine from S-methyl-5-thio-alpha-D-ribose 1-phosphate: step 2/6. Catalyzes the dehydration of methylthioribulose-1-phosphate (MTRu-1-P) into 2,3-diketo-5-methylthiopentyl-1-phosphate (DK-MTP-1-P). The sequence is that of Methylthioribulose-1-phosphate dehydratase from Yersinia pseudotuberculosis serotype O:1b (strain IP 31758).